Here is a 354-residue protein sequence, read N- to C-terminus: Protein RecA (354 aa).

Position 68 to 75 (68 to 75 (GPESSGKT)) interacts with ATP.

This sequence belongs to the RecA family.

The protein resides in the cytoplasm. In terms of biological role, can catalyze the hydrolysis of ATP in the presence of single-stranded DNA, the ATP-dependent uptake of single-stranded DNA by duplex DNA, and the ATP-dependent hybridization of homologous single-stranded DNAs. It interacts with LexA causing its activation and leading to its autocatalytic cleavage. This is Protein RecA from Synechocystis sp. (strain ATCC 27184 / PCC 6803 / Kazusa).